The following is a 152-amino-acid chain: Transcriptional regulator MraZ (152 aa).

SpoVT-AbrB domains follow at residues 5 to 52 (ASAI…PLDE) and 81 to 124 (AHEC…DETA).

This sequence belongs to the MraZ family. As to quaternary structure, forms oligomers.

Its subcellular location is the cytoplasm. The protein localises to the nucleoid. This is Transcriptional regulator MraZ from Shewanella woodyi (strain ATCC 51908 / MS32).